A 527-amino-acid chain; its full sequence is Ribonuclease Y (527 aa).

The helical transmembrane segment at Ile-21–Val-41 threads the bilayer. Residues Arg-78–Glu-97 form a disordered region. One can recognise a KH domain in the interval Thr-217–Val-302. The region spanning Val-343 to Ala-436 is the HD domain.

This sequence belongs to the RNase Y family.

It is found in the cell membrane. Its function is as follows. Endoribonuclease that initiates mRNA decay. The chain is Ribonuclease Y from Dehalococcoides mccartyi (strain ATCC BAA-2100 / JCM 16839 / KCTC 5957 / BAV1).